A 156-amino-acid polypeptide reads, in one-letter code: Small ribosomal subunit protein uS7 (156 aa).

The protein belongs to the universal ribosomal protein uS7 family. Part of the 30S ribosomal subunit. Contacts proteins S9 and S11.

One of the primary rRNA binding proteins, it binds directly to 16S rRNA where it nucleates assembly of the head domain of the 30S subunit. Is located at the subunit interface close to the decoding center, probably blocks exit of the E-site tRNA. The protein is Small ribosomal subunit protein uS7 of Salmonella agona (strain SL483).